Here is a 549-residue protein sequence, read N- to C-terminus: Eukaryotic translation initiation factor 4B2 (549 aa).

Disordered stretches follow at residues 1–446 and 465–549; these read MSKP…DLIR and FRPR…REGW. Residues 24-46 are compositionally biased toward low complexity; that stretch reads AEATATAADSQSFPSLKEAATAK. 2 stretches are compositionally biased toward gly residues: residues 96–109 and 126–136; these read RLGG…GGRS and SWGGGGGGRRS. The Nuclear localization signal 1 signature appears at 169 to 176; it reads GKKSLPSF. Residues 184 to 218 show a composition bias toward gly residues; it reads RYGGGGGSFGGGGGGGAGSYGGGGAGAGSGGGGGF. The short motif at 234–241 is the Nuclear localization signal 2 element; sequence SSTFGSGF. Basic and acidic residues predominate over residues 263 to 278; that stretch reads QEERRRLVFEPRKADT. The segment covering 281-292 has biased composition (polar residues); the sequence is SETPTAVKTSKP. Residues 299–323 are compositionally biased toward basic and acidic residues; it reads RPREQVLAEKGLDWKKLDSDIEAKK. Over residues 327–349 the composition is skewed to low complexity; the sequence is SRPSSAQSSRPSSAQSNRSESSA. Basic and acidic residues-rich tracts occupy residues 369–431, 485–507, and 518–549; these read AKPR…KESQ, ERPH…ERPR, and PVDD…REGW.

This sequence belongs to the eIF-4 subunit B family. In terms of assembly, homodimer. Nonspherical monomer. mRNA-discriminating component of initiation complexes. Phosphorylated.

The protein localises to the nucleus. In terms of biological role, promotes the eIF4F and eIF4A RNA-dependent ATP-hydrolysis activity with different efficiency depending on mRNAs, thus providing mRNA discrimination during initiation of translation. The protein is Eukaryotic translation initiation factor 4B2 of Arabidopsis thaliana (Mouse-ear cress).